The sequence spans 205 residues: Outer-membrane lipoprotein carrier protein (205 aa).

Residues 1–22 (MKKIVIVISILLTSFLSSAVSA) form the signal peptide.

This sequence belongs to the LolA family. In terms of assembly, monomer.

It localises to the periplasm. Its function is as follows. Participates in the translocation of lipoproteins from the inner membrane to the outer membrane. Only forms a complex with a lipoprotein if the residue after the N-terminal Cys is not an aspartate (The Asp acts as a targeting signal to indicate that the lipoprotein should stay in the inner membrane). This Psychromonas ingrahamii (strain DSM 17664 / CCUG 51855 / 37) protein is Outer-membrane lipoprotein carrier protein.